A 95-amino-acid polypeptide reads, in one-letter code: Aspartyl/glutamyl-tRNA(Asn/Gln) amidotransferase subunit C (95 aa).

The protein belongs to the GatC family. Heterotrimer of A, B and C subunits.

It catalyses the reaction L-glutamyl-tRNA(Gln) + L-glutamine + ATP + H2O = L-glutaminyl-tRNA(Gln) + L-glutamate + ADP + phosphate + H(+). The catalysed reaction is L-aspartyl-tRNA(Asn) + L-glutamine + ATP + H2O = L-asparaginyl-tRNA(Asn) + L-glutamate + ADP + phosphate + 2 H(+). Its function is as follows. Allows the formation of correctly charged Asn-tRNA(Asn) or Gln-tRNA(Gln) through the transamidation of misacylated Asp-tRNA(Asn) or Glu-tRNA(Gln) in organisms which lack either or both of asparaginyl-tRNA or glutaminyl-tRNA synthetases. The reaction takes place in the presence of glutamine and ATP through an activated phospho-Asp-tRNA(Asn) or phospho-Glu-tRNA(Gln). This Chlorobium phaeobacteroides (strain DSM 266 / SMG 266 / 2430) protein is Aspartyl/glutamyl-tRNA(Asn/Gln) amidotransferase subunit C.